Reading from the N-terminus, the 819-residue chain is NEDD4-binding protein 1 (819 aa).

The segment covering 1–13 (MASGSVQSSSGNG) has biased composition (polar residues). The tract at residues 1–20 (MASGSVQSSSGNGRRQAAVV) is disordered. Residues 80–164 (KQAVRRAKEY…VQQFIALFKD (85 aa)) form the KH-like domain. Basic and acidic residues predominate over residues 226–241 (DDKAECKVNQKDEVSR). 2 disordered regions span residues 226–247 (DDKAECKVNQKDEVSRKGAGTP) and 666–736 (KLDD…MAPR). One can recognise an RNase NYN domain in the interval 517–669 (LKHIIIDGSN…LGRYGPKLDD (153 aa)). Residues 673–689 (KQPNNRTVHSSFPSSNE) are compositionally biased toward polar residues. The tract at residues 772–819 (RSPSETMQLKEALLKIFPEADQRHKINEILTAHPFMRDLNALSAMVLD) is coCUN.

The protein belongs to the N4BP1 family.

It is found in the cytoplasm. The protein localises to the cytosol. Its subcellular location is the nucleus. The protein resides in the nucleolus. It localises to the PML body. Functionally, potent suppressor of cytokine production that acts as a regulator of innate immune signaling and inflammation. Acts as a key negative regulator of select cytokine and chemokine responses elicited by TRIF-independent Toll-like receptors (TLRs), thereby limiting inflammatory cytokine responses to minor insults. Has ribonuclease activity. This is NEDD4-binding protein 1 from Xenopus tropicalis (Western clawed frog).